The primary structure comprises 182 residues: UPF0690 protein C1orf52 homolog (182 aa).

The tract at residues 1 to 61 (MAAEEKDPLS…AEKRLPGPDE (61 aa)) is disordered. Positions 23-32 (SDEEDNSEPE) are enriched in acidic residues. Basic and acidic residues predominate over residues 51 to 61 (KAEKRLPGPDE). Threonine 67 is modified (phosphothreonine). Tyrosine 132 is modified (phosphotyrosine). The interval 132–182 (YEDNGDDAPQNAKKARLLPEGEETVESDDEKDEHTSKKRKIELGEPTKKKK) is disordered. Over residues 151-162 (EGEETVESDDEK) the composition is skewed to acidic residues. Serine 158 is subject to Phosphoserine. Residues 172-182 (IELGEPTKKKK) are compositionally biased toward basic and acidic residues.

It belongs to the UPF0690 family.

This chain is UPF0690 protein C1orf52 homolog, found in Bos taurus (Bovine).